Here is an 880-residue protein sequence, read N- to C-terminus: Alanine--tRNA ligase (880 aa).

Zn(2+) contacts are provided by His567, His571, Cys669, and His673.

Belongs to the class-II aminoacyl-tRNA synthetase family. Zn(2+) serves as cofactor.

It is found in the cytoplasm. It catalyses the reaction tRNA(Ala) + L-alanine + ATP = L-alanyl-tRNA(Ala) + AMP + diphosphate. Its function is as follows. Catalyzes the attachment of alanine to tRNA(Ala) in a two-step reaction: alanine is first activated by ATP to form Ala-AMP and then transferred to the acceptor end of tRNA(Ala). Also edits incorrectly charged Ser-tRNA(Ala) and Gly-tRNA(Ala) via its editing domain. In Bacillus thuringiensis (strain Al Hakam), this protein is Alanine--tRNA ligase.